Reading from the N-terminus, the 161-residue chain is V-type proton ATPase 16 kDa proteolipid subunit c 2 (161 aa).

Over 1-15 (MSYDLETAEHAAYAP) the chain is Lumenal. The helical transmembrane segment at 16–36 (FFGYMGAASAQIFTVLGAAYG) threads the bilayer. The Cytoplasmic portion of the chain corresponds to 37–58 (TAKSAVGICSMGVMRPELIMKS). A helical transmembrane segment spans residues 59–79 (VIPVIMAGIIGIYGLVVAMVL). Over 80–98 (KGKVQAASAGYDLNKGFAH) the chain is Lumenal. Residues 99–119 (LAAGLTCGLCGLGAGYAIGIV) traverse the membrane as a helical segment. The Cytoplasmic portion of the chain corresponds to 120 to 137 (GDAGVRGTAQQPRLFVGM). Residues 138–158 (ILILIFSEVLGLYGMIVALIL) traverse the membrane as a helical segment. Residues 159-161 (GTS) are Lumenal-facing.

This sequence belongs to the V-ATPase proteolipid subunit family. As to quaternary structure, V-ATPase is a heteromultimeric enzyme made up of two complexes: the ATP-hydrolytic V1 complex and the proton translocation V0 complex. The V1 complex consists of three catalytic AB heterodimers that form a heterohexamer, three peripheral stalks each consisting of EG heterodimers, one central rotor including subunits D and F, and the regulatory subunits C and H. The proton translocation complex V0 consists of the proton transport subunit a, a ring of proteolipid subunits c9c'', rotary subunit d, subunits e and f, and the accessory subunits vah-19/Ac45 and vah-20/PRR.

It is found in the membrane. Its function is as follows. Proton-conducting pore forming subunit of the V0 complex of vacuolar(H+)-ATPase (V-ATPase), a multisubunit enzyme composed of a peripheral complex (V1) that hydrolyzes ATP and a membrane integral complex (V0) that translocates protons. V-ATPase is responsible for acidifying and maintaining the pH of intracellular compartments and in some cell types, is targeted to the plasma membrane, where it is responsible for acidifying the extracellular environment. Involved in necrotic cell death. Required along with other vacuolar ATPase components for the removal of protein aggregates which form in immature oocytes in the distal gonad. This removal occurs as the oocytes mature and move to the proximal gonad, is triggered by the introduction of sperm through mating and occurs before fertilization. The introduction of sperm triggers V-ATPase accumulation in proximal oocytes and induces lysosomal acidification which leads to engulfing of protein aggregates by lysosomes and subsequent clearance of the aggregates. Lysosomal acidification also leads to changes in mitochondrial morphology and function. Mitochondria in distal immature oocytes are fragmented, produce high levels of reactive oxygen species (ROS) and have high membrane potential, indicative of metabolic inactivity. In contrast, mitochondria in proximal mature oocytes are tubular with lower ROS levels and membrane potential, indicative of an active metabolic state required for aggregate mobilization before clearance. The chain is V-type proton ATPase 16 kDa proteolipid subunit c 2 from Caenorhabditis briggsae.